A 509-amino-acid polypeptide reads, in one-letter code: Legumin A (509 aa).

Residues 1–21 form the signal peptide; the sequence is MAINPSLLFLSLLFLFNGCLA. Cystine bridges form between Cys-34-Cys-67 and Cys-110-Cys-331. A Cupin type-1 1 domain is found at 39-273; sequence LRASAPQTRI…AFNVDHDIIR (235 aa). Disordered regions lie at residues 187–248 and 298–325; these read AGNP…ESSS and PRME…QDNG. Residues 212–228 show a composition bias toward acidic residues; sequence EESEEEEGEGEEEEEED. Residues 299-314 are compositionally biased toward basic and acidic residues; the sequence is RMEEEEREERQQEQRY. Positions 337–486 constitute a Cupin type-1 2 domain; it reads ENLADPERAD…SYQVSREDAR (150 aa).

The protein belongs to the 11S seed storage protein (globulins) family. In terms of assembly, hexamer; each subunit is composed of an acidic and a basic chain derived from a single precursor and linked by a disulfide bond.

Its function is as follows. This is a seed storage protein. The protein is Legumin A (LEGA) of Gossypium hirsutum (Upland cotton).